A 588-amino-acid polypeptide reads, in one-letter code: Adenine deaminase (588 aa).

Belongs to the metallo-dependent hydrolases superfamily. Adenine deaminase family. As to quaternary structure, homodimer. Requires Mn(2+) as cofactor.

The enzyme catalyses adenine + H2O + H(+) = hypoxanthine + NH4(+). The chain is Adenine deaminase from Shigella flexneri.